Here is a 544-residue protein sequence, read N- to C-terminus: Glucans biosynthesis protein G (544 aa).

The first 34 residues, 1 to 34 (MVSLLRCQSSKPYSSLICSLALGVAFALSGTAYA), serve as a signal peptide directing secretion.

The protein belongs to the OpgD/OpgG family.

It localises to the periplasm. It functions in the pathway glycan metabolism; osmoregulated periplasmic glucan (OPG) biosynthesis. Its function is as follows. Involved in the biosynthesis of osmoregulated periplasmic glucans (OPGs). The polypeptide is Glucans biosynthesis protein G (Shewanella putrefaciens (strain CN-32 / ATCC BAA-453)).